The primary structure comprises 379 residues: Protein-glutamate methylesterase/protein-glutamine glutaminase (379 aa).

In terms of domain architecture, Response regulatory spans 4–121; sequence KVLVVDDSSF…AKNSDEAGSL (118 aa). Asp55 carries the 4-aspartylphosphate modification. A CheB-type methylesterase domain is found at 185–379; it reads SGKEYKLLAI…ASMVKEISRG (195 aa). Catalysis depends on residues Ser197, His224, and Asp321.

The protein belongs to the CheB family. In terms of processing, phosphorylated by CheA. Phosphorylation of the N-terminal regulatory domain activates the methylesterase activity.

It is found in the cytoplasm. It carries out the reaction [protein]-L-glutamate 5-O-methyl ester + H2O = L-glutamyl-[protein] + methanol + H(+). The enzyme catalyses L-glutaminyl-[protein] + H2O = L-glutamyl-[protein] + NH4(+). Involved in chemotaxis. Part of a chemotaxis signal transduction system that modulates chemotaxis in response to various stimuli. Catalyzes the demethylation of specific methylglutamate residues introduced into the chemoreceptors (methyl-accepting chemotaxis proteins or MCP) by CheR. Also mediates the irreversible deamidation of specific glutamine residues to glutamic acid. This Colwellia psychrerythraea (strain 34H / ATCC BAA-681) (Vibrio psychroerythus) protein is Protein-glutamate methylesterase/protein-glutamine glutaminase.